Here is a 362-residue protein sequence, read N- to C-terminus: Chorismate synthase (362 aa).

Arginine 46 contacts NADP(+). Residues 122 to 124, 238 to 239, glycine 278, 293 to 297, and arginine 319 contribute to the FMN site; these read RSS, NA, and KPTPS.

The protein belongs to the chorismate synthase family. Homotetramer. The cofactor is FMNH2.

It carries out the reaction 5-O-(1-carboxyvinyl)-3-phosphoshikimate = chorismate + phosphate. It participates in metabolic intermediate biosynthesis; chorismate biosynthesis; chorismate from D-erythrose 4-phosphate and phosphoenolpyruvate: step 7/7. Catalyzes the anti-1,4-elimination of the C-3 phosphate and the C-6 proR hydrogen from 5-enolpyruvylshikimate-3-phosphate (EPSP) to yield chorismate, which is the branch point compound that serves as the starting substrate for the three terminal pathways of aromatic amino acid biosynthesis. This reaction introduces a second double bond into the aromatic ring system. The polypeptide is Chorismate synthase (Campylobacter jejuni (strain RM1221)).